A 262-amino-acid polypeptide reads, in one-letter code: Short-chain reductase protein NovJ (262 aa).

NADP(+) is bound by residues 23-26 (GAGR) and 73-74 (DV). Ser152 is a binding site for substrate. Tyr164 serves as the catalytic Proton acceptor. NADP(+) is bound at residue 164–168 (YATAK).

The protein belongs to the short-chain dehydrogenases/reductases (SDR) family. Heterotetramer; the NovJ(2)K(2) heterotetramer is composed of subunits of 2 NovJ and 2 subunits of NovK.

The protein operates within antibiotic biosynthesis; novobiocin biosynthesis. Catalytic subunit of the NovJ(2)K(2) heterotetramer that catalyzes the NADPH-dependent reduction of the tyrosyl moiety of L-beta-OH-Tyr-S-NovH intermediate to yield the tethered beta-ketotyrosyl-S-NovH in the novobiocin biosynthesis pathway. Novobiocin is an aminocoumarin family antibiotic that targets bacterial DNA gyrases. The polypeptide is Short-chain reductase protein NovJ (novJ) (Streptomyces niveus (Streptomyces spheroides)).